The primary structure comprises 143 residues: Large ribosomal subunit protein uL11 (143 aa).

Belongs to the universal ribosomal protein uL11 family. Part of the ribosomal stalk of the 50S ribosomal subunit. Interacts with L10 and the large rRNA to form the base of the stalk. L10 forms an elongated spine to which L12 dimers bind in a sequential fashion forming a multimeric L10(L12)X complex. Post-translationally, one or more lysine residues are methylated.

Functionally, forms part of the ribosomal stalk which helps the ribosome interact with GTP-bound translation factors. In Halorhodospira halophila (strain DSM 244 / SL1) (Ectothiorhodospira halophila (strain DSM 244 / SL1)), this protein is Large ribosomal subunit protein uL11.